The chain runs to 98 residues: NADH-ubiquinone oxidoreductase chain 4L (98 aa).

3 helical membrane passes run 2–22 (PSISINITLAFTAALLGMLMF), 29–49 (SLLCLEGMMLSMFILSTLIIL), and 61–81 (ILLLVFAACEAAIGLALLVMV).

It belongs to the complex I subunit 4L family. In terms of assembly, core subunit of respiratory chain NADH dehydrogenase (Complex I) which is composed of 45 different subunits.

It is found in the mitochondrion inner membrane. It carries out the reaction a ubiquinone + NADH + 5 H(+)(in) = a ubiquinol + NAD(+) + 4 H(+)(out). Its function is as follows. Core subunit of the mitochondrial membrane respiratory chain NADH dehydrogenase (Complex I) which catalyzes electron transfer from NADH through the respiratory chain, using ubiquinone as an electron acceptor. Part of the enzyme membrane arm which is embedded in the lipid bilayer and involved in proton translocation. This is NADH-ubiquinone oxidoreductase chain 4L (MT-ND4L) from Microcebus griseorufus (Gray-brown mouse lemur).